Consider the following 495-residue polypeptide: uncharacterized protein (495 aa).

FAD contacts are provided by Ser-16, Glu-36, Trp-45, Asp-56, Tyr-62, and Val-105.

It belongs to the FAD-binding monooxygenase family. FAD serves as cofactor.

This is an uncharacterized protein from Mycobacterium tuberculosis (strain CDC 1551 / Oshkosh).